The following is a 169-amino-acid chain: Shikimate kinase (169 aa).

13-18 is a binding site for ATP; sequence GAGKST. Residue serine 17 participates in Mg(2+) binding. Substrate contacts are provided by aspartate 35, arginine 59, and glycine 80. Arginine 117 is a binding site for ATP. Substrate is bound at residue arginine 136. Position 153 (arginine 153) interacts with ATP.

It belongs to the shikimate kinase family. Monomer. Mg(2+) is required as a cofactor.

It localises to the cytoplasm. It catalyses the reaction shikimate + ATP = 3-phosphoshikimate + ADP + H(+). The protein operates within metabolic intermediate biosynthesis; chorismate biosynthesis; chorismate from D-erythrose 4-phosphate and phosphoenolpyruvate: step 5/7. Its function is as follows. Catalyzes the specific phosphorylation of the 3-hydroxyl group of shikimic acid using ATP as a cosubstrate. The polypeptide is Shikimate kinase (Corynebacterium efficiens (strain DSM 44549 / YS-314 / AJ 12310 / JCM 11189 / NBRC 100395)).